The chain runs to 237 residues: Pyridoxine 5'-phosphate synthase (237 aa).

Positions 7 and 18 each coordinate 3-amino-2-oxopropyl phosphate. The Proton acceptor role is filled by H43. 2 residues coordinate 1-deoxy-D-xylulose 5-phosphate: R45 and H50. Residue E70 is the Proton acceptor of the active site. T100 is a 1-deoxy-D-xylulose 5-phosphate binding site. Catalysis depends on H190, which acts as the Proton donor. 3-amino-2-oxopropyl phosphate is bound by residues D191 and 213 to 214 (GH).

It belongs to the PNP synthase family. Homooctamer; tetramer of dimers.

The protein localises to the cytoplasm. It catalyses the reaction 3-amino-2-oxopropyl phosphate + 1-deoxy-D-xylulose 5-phosphate = pyridoxine 5'-phosphate + phosphate + 2 H2O + H(+). The protein operates within cofactor biosynthesis; pyridoxine 5'-phosphate biosynthesis; pyridoxine 5'-phosphate from D-erythrose 4-phosphate: step 5/5. Functionally, catalyzes the complicated ring closure reaction between the two acyclic compounds 1-deoxy-D-xylulose-5-phosphate (DXP) and 3-amino-2-oxopropyl phosphate (1-amino-acetone-3-phosphate or AAP) to form pyridoxine 5'-phosphate (PNP) and inorganic phosphate. This chain is Pyridoxine 5'-phosphate synthase, found in Flavobacterium johnsoniae (strain ATCC 17061 / DSM 2064 / JCM 8514 / BCRC 14874 / CCUG 350202 / NBRC 14942 / NCIMB 11054 / UW101) (Cytophaga johnsonae).